The sequence spans 177 residues: Large ribosomal subunit protein uL6 (177 aa).

Belongs to the universal ribosomal protein uL6 family. Part of the 50S ribosomal subunit.

In terms of biological role, this protein binds to the 23S rRNA, and is important in its secondary structure. It is located near the subunit interface in the base of the L7/L12 stalk, and near the tRNA binding site of the peptidyltransferase center. This is Large ribosomal subunit protein uL6 from Edwardsiella ictaluri (strain 93-146).